A 375-amino-acid chain; its full sequence is 4-hydroxy-3-methylbut-2-en-1-yl diphosphate synthase (flavodoxin) (375 aa).

4 residues coordinate [4Fe-4S] cluster: Cys-275, Cys-278, Cys-310, and Glu-317.

This sequence belongs to the IspG family. [4Fe-4S] cluster serves as cofactor.

The enzyme catalyses (2E)-4-hydroxy-3-methylbut-2-enyl diphosphate + oxidized [flavodoxin] + H2O + 2 H(+) = 2-C-methyl-D-erythritol 2,4-cyclic diphosphate + reduced [flavodoxin]. The protein operates within isoprenoid biosynthesis; isopentenyl diphosphate biosynthesis via DXP pathway; isopentenyl diphosphate from 1-deoxy-D-xylulose 5-phosphate: step 5/6. Converts 2C-methyl-D-erythritol 2,4-cyclodiphosphate (ME-2,4cPP) into 1-hydroxy-2-methyl-2-(E)-butenyl 4-diphosphate. This chain is 4-hydroxy-3-methylbut-2-en-1-yl diphosphate synthase (flavodoxin), found in Ruegeria pomeroyi (strain ATCC 700808 / DSM 15171 / DSS-3) (Silicibacter pomeroyi).